Reading from the N-terminus, the 328-residue chain is Basic leucine zipper (bZIP) transcription factor atfB (328 aa).

A disordered region spans residues 1–39 (MLPEQSAFGRSAMPGSDAVNPGPSPFAPPPNSFSGDFLG). Residues 22–31 (GPSPFAPPPN) are compositionally biased toward pro residues. The tract at residues 163–202 (KAKREKFLERNRLAASKCRQKKKEHTQLLESRYREQSDKK) is basic motif. The bZIP domain maps to 163–226 (KAKREKFLER…LGLKNEVLKH (64 aa)). The segment at 205 to 219 (LVSEIARLRSEILGL) is leucine-zipper. The tract at residues 250 to 313 (TTAPDLTDVP…SEASVLTENS (64 aa)) is disordered. The segment covering 262 to 277 (ASSSEGPMTPRPQQAL) has biased composition (polar residues). Residues 283–305 (DPLHLEPSRADGSTDHSVRRDSE) are compositionally biased toward basic and acidic residues.

Belongs to the bZIP family. ATF subfamily.

The protein resides in the nucleus. In terms of biological role, transcription factor that acts as a key player in the regulatory circuit that integrates secondary metabolism and cellular response to oxidative stress. Regulates the genes involved in development, as well as osmotic, oxidative, and cell wall stresses. Participates in the caspofungin paradoxical effect (CPE), where fungi grow beyond the minimum inhibitory concentration of caspofungin. Plays a role in virulence. The protein is Basic leucine zipper (bZIP) transcription factor atfB of Aspergillus fumigatus (strain ATCC MYA-4609 / CBS 101355 / FGSC A1100 / Af293) (Neosartorya fumigata).